The sequence spans 228 residues: Ribosomal RNA large subunit methyltransferase E (228 aa).

S-adenosyl-L-methionine contacts are provided by Gly-76, Trp-78, Asp-99, Asp-115, and Asp-139. Catalysis depends on Lys-179, which acts as the Proton acceptor.

The protein belongs to the class I-like SAM-binding methyltransferase superfamily. RNA methyltransferase RlmE family.

The protein localises to the cytoplasm. The enzyme catalyses uridine(2552) in 23S rRNA + S-adenosyl-L-methionine = 2'-O-methyluridine(2552) in 23S rRNA + S-adenosyl-L-homocysteine + H(+). In terms of biological role, specifically methylates the uridine in position 2552 of 23S rRNA at the 2'-O position of the ribose in the fully assembled 50S ribosomal subunit. In Bradyrhizobium diazoefficiens (strain JCM 10833 / BCRC 13528 / IAM 13628 / NBRC 14792 / USDA 110), this protein is Ribosomal RNA large subunit methyltransferase E.